A 462-amino-acid polypeptide reads, in one-letter code: Steroidogenic factor 1 (462 aa).

Residues 10–85 (DELCPVCGDK…VGMRLEAVRA (76 aa)) constitute a DNA-binding region (nuclear receptor). An NR C4-type zinc finger spans residues 13-33 (CPVCGDKVSGYHYGLLTCESC). Lysine 34, lysine 38, and lysine 72 each carry N6-acetyllysine. The NR C4-type zinc finger occupies 49 to 73 (CTESQSCKIDKTQRKRCPFCRFQKC). The segment at 117–149 (GFKLETGPPMGVPPPPPPPPDYMLPPSLHAPEP) is disordered. Residue lysine 119 forms a Glycyl lysine isopeptide (Lys-Gly) (interchain with G-Cter in SUMO) linkage. Over residues 126-139 (MGVPPPPPPPPDYM) the composition is skewed to pro residues. Lysine 194 is covalently cross-linked (Glycyl lysine isopeptide (Lys-Gly) (interchain with G-Cter in SUMO)). At serine 203 the chain carries Phosphoserine; by CDK7. Residues 223–460 (NVPELILQLL…NLLIEMLQAK (238 aa)) form the NR LBD domain. The a 1,2-diacyl-sn-glycero-3-phosphocholine site is built by glycine 342, tyrosine 437, and lysine 441.

This sequence belongs to the nuclear hormone receptor family. NR5 subfamily. Binds DNA as a monomer. Part of a complex consisting of SFPQ, NONO and NR5A1. Interacts with NR0B2, NCOA2 and PPARGC1A. Interacts with DGKQ and CDK7. Binds to and activated by HIPK3. Acetylation stimulates the transcriptional activity. In terms of processing, sumoylation reduces CDK7-mediated phosphorylation on Ser-203. Post-translationally, phosphorylated on Ser-203 by CDK7. This phosphorylation promotes transcriptional activity.

The protein localises to the nucleus. In terms of biological role, transcriptional activator. Seems to be essential for sexual differentiation and formation of the primary steroidogenic tissues. Binds to the Ad4 site found in the promoter region of steroidogenic P450 genes such as CYP11A, CYP11B and CYP21B. Also regulates the AMH/Muellerian inhibiting substance gene as well as the AHCH and STAR genes. 5'-YCAAGGYC-3' and 5'-RRAGGTCA-3' are the consensus sequences for the recognition by NR5A1. The SFPQ-NONO-NR5A1 complex binds to the CYP17 promoter and regulates basal and cAMP-dependent transcriptional activity. Binds phosphatidylcholine and phospholipids with a phosphatidylinositol (PI) headgroup, in particular PI(3,4)P2 and PI(3,4,5)P3. Activated by the phosphorylation of NR5A1 by HIPK3 leading to increased steroidogenic gene expression upon cAMP signaling pathway stimulation. The polypeptide is Steroidogenic factor 1 (Nr5a1) (Rattus norvegicus (Rat)).